We begin with the raw amino-acid sequence, 265 residues long: Thymidine kinase 2, mitochondrial (265 aa).

A mitochondrion-targeting transit peptide spans 1–33 (MLLWPLRGWAARALRCFGPGSRGSPASGPGPRR). The segment covering 20–32 (GSRGSPASGPGPR) has biased composition (low complexity). A disordered region spans residues 20–47 (GSRGSPASGPGPRRVQRRAWPPDKEQEK). Residue 57-65 (GNIASGKTT) coordinates ATP. E133 serves as the catalytic Proton acceptor.

Belongs to the DCK/DGK family. In terms of assembly, monomer. As to expression, predominantly expressed in liver, pancreas, muscle, and brain.

Its subcellular location is the mitochondrion. It carries out the reaction thymidine + ATP = dTMP + ADP + H(+). The enzyme catalyses 2'-deoxycytidine + ATP = dCMP + ADP + H(+). The catalysed reaction is 2'-deoxyuridine + ATP = dUMP + ADP + H(+). Functionally, phosphorylates thymidine, deoxycytidine, and deoxyuridine in the mitochondrial matrix. In non-replicating cells, where cytosolic dNTP synthesis is down-regulated, mtDNA synthesis depends solely on TK2 and DGUOK. Widely used as target of antiviral and chemotherapeutic agents. The chain is Thymidine kinase 2, mitochondrial from Homo sapiens (Human).